The sequence spans 177 residues: MAEVHIIGQILKAVDFAEPHLYCKWSLQSGNAWRLVQGEVQGQSHVASHRLQSSSDFAQPLDIHLSTASVQGWPRLLVEVYAVNVLQQSWPVGYGFVHVPSTPGTHRLEIGTWKVAPNGLWQSLRERFGGGGAALSKTDLLYSGVERYKLQTLSSGKVIVELNLIFRKFDEYGVEFK.

The C2 B9-type domain occupies Ala2–Asn118.

The protein belongs to the B9D family. As to quaternary structure, probable component of the tectonic-like complex (also named MKS complex), composed of B9d1, B9d2, Cc2d2a, Mks1 and tctn. In terms of tissue distribution, expressed in chordotonal neurons in the antennae (at protein level). Expressed in spermatids (at protein level).

It is found in the cytoplasm. The protein localises to the cytoskeleton. Its subcellular location is the cilium basal body. Its function is as follows. Probable component of the tectonic-like complex (also named MKS complex), a complex localized at the transition zone of primary cilia. Has a role in ciliary structure and function. The sequence is that of B9 domain-containing protein 2 from Drosophila melanogaster (Fruit fly).